We begin with the raw amino-acid sequence, 2967 residues long: BEACH domain-containing protein lvsD (2967 aa).

Disordered stretches follow at residues 1–25 (MSSP…RIGG), 322–364 (NNNN…SSNS), 588–615 (ILSI…QQQL), 917–936 (NNSN…NNIN), 1077–1105 (GGSN…KDKD), 1173–1220 (NTSS…SDHR), 1583–1613 (NNNS…NNEN), 1831–1859 (QQQQ…SSVV), 1921–2009 (PQKT…TLNN), and 2029–2062 (KSTL…NNKN). The region spanning 229–491 (MTFRKAPSSV…QDLFRKGSNY (263 aa)) is the BEACH 1 domain. Over residues 1079 to 1092 (SNNNNNNNNNNSNN) the composition is skewed to low complexity. Residues 1093-1105 (NKDKIDSNNKDKD) show a composition bias toward basic and acidic residues. Low complexity-rich tracts occupy residues 1185 to 1194 (PLLTSTKSMS), 1583 to 1611 (NNNS…LNNN), 1831 to 1857 (QQQQ…SSSS), 1926 to 1980 (QNQH…SFSN), 1993 to 2006 (NIIT…TTST), and 2034 to 2062 (SSSS…NNKN). In terms of domain architecture, BEACH-type PH spans 2060-2162 (NKNIKLEFST…ICAQILKLIG (103 aa)). BEACH domains lie at 2202–2492 (TPQQ…HPQR) and 2628–2785 (NSRV…IYSN). WD repeat units lie at residues 2658–2710 (NHKS…SDHH) and 2720–2761 (GHNF…KSIQ). 2 disordered regions span residues 2798-2820 (SATT…SSNT) and 2915-2934 (PSTS…NNGN). Low complexity-rich tracts occupy residues 2811 to 2820 (SSSSLSSSNT) and 2924 to 2934 (NSNNNNNNNGN).

In Dictyostelium discoideum (Social amoeba), this protein is BEACH domain-containing protein lvsD (lvsD).